We begin with the raw amino-acid sequence, 306 residues long: ATP-dependent (S)-NAD(P)H-hydrate dehydratase (306 aa).

One can recognise a YjeF C-terminal domain in the interval 4–300 (LIDLFKPMIP…NQISNGFEDL (297 aa)). (6S)-NADPHX contacts are provided by residues G104 and 157 to 163 (NFVEFKS). ATP-binding positions include 197–201 (KGKED) and 216–225 (GMPRRCGGQG). D226 is a binding site for (6S)-NADPHX.

It belongs to the NnrD/CARKD family. The cofactor is Mg(2+).

The catalysed reaction is (6S)-NADHX + ATP = ADP + phosphate + NADH + H(+). The enzyme catalyses (6S)-NADPHX + ATP = ADP + phosphate + NADPH + H(+). Its function is as follows. Catalyzes the dehydration of the S-form of NAD(P)HX at the expense of ATP, which is converted to ADP. Together with NAD(P)HX epimerase, which catalyzes the epimerization of the S- and R-forms, the enzyme allows the repair of both epimers of NAD(P)HX, a damaged form of NAD(P)H that is a result of enzymatic or heat-dependent hydration. This is ATP-dependent (S)-NAD(P)H-hydrate dehydratase from Dictyostelium discoideum (Social amoeba).